Consider the following 947-residue polypeptide: MTPLSSPLSQYWQTVVERLPEGFTETSLSVQAKSVLTFSDFALDSVIAHPEWLAELESASPQADEWRHYAGWLQEALAGVCDDASLMRELRFFRRRIMVRIAWAQTLSLVDDETILQQLSHLAETLIVGARDWLYAACCREWGTPCNPQGVPQPLLILGMGKLGGGELNFSSDIDLIFAWPEHGETRGGRRELDNAQFFTRLGQRLIKALDQPTMDGFVYRVDMRLRPFGDSGPLVLSFAALEDYYQEQGRDWERYAMVKARLMGDNDDAWSRELRAMLRPFVFRRYIDFSVIQSLRNMKGMIAREVRRRGLKDNIKLGAGGIREIEFIVQVFQLIRGGREPSLQSRSLLPTLDAIAALHLLPENDVAQLRVAYLFLRRLENLLQSINDEQTQTLPADDLNRARLAWGMKAENWPQLVGELTDHMANVRRVFNELIGDDEADTPQEEERSEPWREVWQDALQEDDSTPVLAHLADEDRRQVLTLIADFRKELDKRPIGPRGRQVLDQLMPHLLADVCSREDAAVTLSRITPLLAGIVTRTTYLELLSEFPGALKHLIMLCAASPMIASQLARYPLLLDELLDPGTLYQPTATDAYRDELRQYLLRVPEEDEEQQLEALRQFKQAQLLRIAAADIAGTLPVMKVSDHLTWLAEAMIDAVVQQAWTQMVARYGQPAHLDERQGRGFAVVGYGKLGGWELGYSSDLDLIFLHDCPMDVMTNGEREIDGRQFYLRLAQRIMHLFSTRTSSGILYEVDARLRPSGAAGMLVTSADAFADYQQHEAWTWEHQALVRARVVYGDPQLTSQFDAVRRTIMTTARDGKTLQTEVREMREKMRAHLGNKHRDRFDIKADEGGITDIEFIAQYLVLRYAHEKPKLTRWSDNVRILELLAQNGIMDEHEAQALTVAYTTLRDELHHLALQELPGHVAQTCFSKERALVQASWRKWLVAV.

Positions 1 to 440 are adenylyl removase; that stretch reads MTPLSSPLSQ…VFNELIGDDE (440 aa). The tract at residues 450-947 is adenylyl transferase; sequence SEPWREVWQD…ASWRKWLVAV (498 aa).

It belongs to the GlnE family. The cofactor is Mg(2+).

The enzyme catalyses [glutamine synthetase]-O(4)-(5'-adenylyl)-L-tyrosine + phosphate = [glutamine synthetase]-L-tyrosine + ADP. It carries out the reaction [glutamine synthetase]-L-tyrosine + ATP = [glutamine synthetase]-O(4)-(5'-adenylyl)-L-tyrosine + diphosphate. Functionally, involved in the regulation of glutamine synthetase GlnA, a key enzyme in the process to assimilate ammonia. When cellular nitrogen levels are high, the C-terminal adenylyl transferase (AT) inactivates GlnA by covalent transfer of an adenylyl group from ATP to specific tyrosine residue of GlnA, thus reducing its activity. Conversely, when nitrogen levels are low, the N-terminal adenylyl removase (AR) activates GlnA by removing the adenylyl group by phosphorolysis, increasing its activity. The regulatory region of GlnE binds the signal transduction protein PII (GlnB) which indicates the nitrogen status of the cell. The chain is Bifunctional glutamine synthetase adenylyltransferase/adenylyl-removing enzyme from Salmonella paratyphi C (strain RKS4594).